The sequence spans 36 residues: Potassium channel toxin alpha-KTx 23.1 (36 aa).

Disulfide bonds link cysteine 6–cysteine 26, cysteine 12–cysteine 31, cysteine 16–cysteine 33, and cysteine 21–cysteine 36. At cysteine 36 the chain carries Cysteine amide.

This sequence belongs to the short scorpion toxin superfamily. Potassium channel inhibitor family. Alpha-KTx 23 subfamily. In terms of tissue distribution, expressed by the venom gland.

The protein resides in the secreted. Its function is as follows. Voltage-gated potassium channel inhibitor. Selectively and irreversibly binds (K(d)=2.9 pM) and blocks hKv1.3/KCNA3 potassium channels of human T-lymphocytes. Weakly blocks hKCa3.1/KCNN4, mKv1.1/KCNA1, and hKv1.2/KCNA2 channels. In vivo, high doses (200 ug) produce no symptoms of intoxication when injected into mice. This Vaejovis mexicanus smithi (Mexican scorpion) protein is Potassium channel toxin alpha-KTx 23.1.